Consider the following 394-residue polypeptide: Mitogen-activated protein kinase homolog D5 (394 aa).

Residues 62–347 form the Protein kinase domain; sequence RPPIMPIGKG…VENALAHPYL (286 aa). ATP contacts are provided by residues 68-76 and Lys91; that span reads IGKGAYGIV. The active-site Proton acceptor is the Asp188. Thr220 carries the phosphothreonine modification. Positions 220 to 222 match the TXY motif; that stretch reads TEY. Tyr222 is subject to Phosphotyrosine.

It belongs to the protein kinase superfamily. CMGC Ser/Thr protein kinase family. MAP kinase subfamily. Mg(2+) is required as a cofactor. Post-translationally, dually phosphorylated on Thr-220 and Tyr-222, which activates the enzyme. Leaves, roots, root apices, and dormant and growing axillary buds.

The enzyme catalyses L-seryl-[protein] + ATP = O-phospho-L-seryl-[protein] + ADP + H(+). The catalysed reaction is L-threonyl-[protein] + ATP = O-phospho-L-threonyl-[protein] + ADP + H(+). Its activity is regulated as follows. Activated by tyrosine and threonine phosphorylation. This chain is Mitogen-activated protein kinase homolog D5, found in Pisum sativum (Garden pea).